Consider the following 261-residue polypeptide: Probable membrane transporter protein PD_1894 (261 aa).

A run of 8 helical transmembrane segments spans residues 6-26 (LIVT…LGGG), 45-64 (HIAI…ANLI), 78-98 (VIFA…GMLI), 99-119 (DGQR…LLML), 150-170 (AASG…LIFA), 175-195 (TINA…ITTL), 205-225 (WTIA…GTLL), and 239-259 (VFGL…WASL).

Belongs to the 4-toluene sulfonate uptake permease (TSUP) (TC 2.A.102) family.

Its subcellular location is the cell membrane. The polypeptide is Probable membrane transporter protein PD_1894 (Xylella fastidiosa (strain Temecula1 / ATCC 700964)).